The chain runs to 501 residues: Neuronal acetylcholine receptor subunit beta-2 (501 aa).

Residues 1-25 (MARCSNSMALLFSFGLLWLCSGVLG) form the signal peptide. Topologically, residues 26–238 (TDTEERLVEH…IIRRKPLFYT (213 aa)) are extracellular. N-linked (GlcNAc...) asparagine glycans are attached at residues asparagine 51 and asparagine 168. A disulfide bond links cysteine 155 and cysteine 169. The helical transmembrane segment at 239–259 (INLIIPCVLITSLAILVFYLP) threads the bilayer. At 260–267 (SDCGEKMT) the chain is on the cytoplasmic side. A helical transmembrane segment spans residues 268–288 (LCISVLLALTVFLLLISKIVP). Residues 289 to 300 (PTSLDVPLVGKY) are Extracellular-facing. A helical membrane pass occupies residues 301-321 (LMFTMVLVTFSIVTSVCVLNV). At 322–459 (HHRSPTTHTM…WKYVAMVIDR (138 aa)) the chain is on the cytoplasmic side. The helical transmembrane segment at 460 to 480 (LFLWIFVFVCVFGTIGMFLQP) threads the bilayer.

It belongs to the ligand-gated ion channel (TC 1.A.9) family. Acetylcholine receptor (TC 1.A.9.1) subfamily. Beta-2/CHRNB2 sub-subfamily. As to quaternary structure, neuronal AChR is a heteropentamer composed of two different types of subunits: alpha and beta. CHRNB2/Beta-2 subunit can be combined to CHRNA2/alpha-2, CHRNA3/alpha-3 or CHRNA4/alpha-4, CHRNA5/alpha-5, CHRNA6/alpha-6 and CHRNB3/beta-3 to give rise to functional receptors. CHRNA2:CHRNB2 and CHRNA4:CHRNB2 nAChR complexes exist in two subtypes: LS (low agonist sensitivity) with a (CHRNA2/4)3:(CHRNB2)2 and HS (high agonist sensitivity) with a (CHRNA2/4)2:(CHRNB2)3 stoichiometry; the subtypes differ in their subunit binding interfaces which are involved in ligand binding. Cells produce predominantly an (CHRNA4)3:(CHRNB2)2 nAChR. The stoichiometric form (CHRNA4)2:(CHRNB2)3 expression is selectively up-regulated by nicotine and has lower single channel conductance and calcium permeability. Also part of the stoichiometric forms: (CHRNA4:CHRNB2)2:CHRNB3 or (CHRNA6:CHRNB2)2:CHRNB3. Can form heteropentamers with CHRNA7, mainly found in basal forebrain cholinergic neurons. Interacts with RIC3; which is required for proper folding and assembly. Interacts with LYPD6.

It is found in the synaptic cell membrane. The protein localises to the cell membrane. It carries out the reaction K(+)(in) = K(+)(out). The catalysed reaction is Na(+)(in) = Na(+)(out). The enzyme catalyses Ca(2+)(in) = Ca(2+)(out). Activated by a myriad of ligands such as acetylcholine, cytisine, nicotine, choline and epibatidine. Channel potentiation by calcium is stoichiometry-selective, CHRNA4:CHRNB2 nACh receptor is achieved by calcium association with topographically distinct sites framed by anionic residues within the CHRNA4 subunit and between the CHRNA4 and CHRNB2 subunits. Oligomeric amyloid-beta protein 42 activates specifially CHRNA7:CHRNB2 nAchRs. nAChR activity is inhibited by the antagonist alpha-conotoxins BuIA, PnIA, PnIC, GID and MII, small disulfide-constrained peptides from cone snails. Component of neuronal acetylcholine receptors (nAChRs) that function as pentameric, ligand-gated cation channels with high calcium permeability among other activities. nAChRs are excitatory neurotrasnmitter receptors formed by a collection of nAChR subunits known to mediate synaptic transmission in the nervous system and the neuromuscular junction. Each nAchR subunit confers differential attributes to channel properties, including activation, deactivation and desensitization kinetics, pH sensitivity, cation permeability, and binding to allosteric modulators. CHRNB2 forms heteropentameric neuronal acetylcholine receptors with CHRNA2, CHRNA3, CHRNA4 and CHRNA6, as well as CHRNA5 and CHRNB3 as accesory subunits. Found in two major stoichiometric forms,(CHRNA4)3:(CHRNB2)2 and (CHRNA4)2:(CHRNB2)3, the two stoichiometric forms differ in their unitary conductance, calcium permeability, ACh sensitivity and potentiation by divalent cation. Heteropentameric channels with CHRNA6 and CHRNA4 exhibit high sensitivity to ACh and nicotine and are predominantly expressed in only a few brain areas, including dopaminergic neurons, norepirephrine neurons and cells of the visual system. nAChrs containing CHRNA6 subunits mediate endogenous cholinergic modulation of dopamine and gamma-aminobutyric acid (GABA) release in response to nicotine at nerve terminals. Also forms functional nAChRs with other subunits such as CHRNA7:CHRNB2, mainly expressed in basal forebrain cholinergic neurons. In Mus musculus (Mouse), this protein is Neuronal acetylcholine receptor subunit beta-2 (Chrnb2).